Consider the following 272-residue polypeptide: Protein MGF 110-11L (272 aa).

The chain crosses the membrane as a helical span at residues 1 to 17; sequence MKVLLGLLLGYSVLILA. N-linked (GlcNAc...) asparagine; by host glycosylation is present at N68. Transmembrane regions (helical) follow at residues 129–149 and 156–176; these read QFCL…CALC and TTMK…PVLN. The N-linked (GlcNAc...) asparagine; by host glycan is linked to N264.

This sequence belongs to the asfivirus MGF 110 family.

It localises to the host membrane. Functionally, plays a role in virus cell tropism, and may be required for efficient virus replication in macrophages. In Ornithodoros (relapsing fever ticks), this protein is Protein MGF 110-11L.